We begin with the raw amino-acid sequence, 359 residues long: 4-galactosyl-N-acetylglucosaminide 3-alpha-L-fucosyltransferase FUT6 (359 aa).

Residues 1 to 14 (MDPLGPAKTQWSWR) lie on the Cytoplasmic side of the membrane. A helical; Signal-anchor for type II membrane protein transmembrane segment spans residues 15-34 (CCLTALLFQLLVAVCFFSYL). Residues 35 to 359 (RVSRDDPTVY…QTRSIAAWFT (325 aa)) are Lumenal-facing. A determines site-specific fucosylation region spans residues 73–112 (KPIALPRCSEMVPGTADCNITADRKVYPQADAVIVHHREV). N91, N153, and N184 each carry an N-linked (GlcNAc...) asparagine glycan.

This sequence belongs to the glycosyltransferase 10 family. In terms of assembly, homodimer and monomer. Monomer (secreted form). Post-translationally, N-glycosylated. Proteolytic cleavage releases a secreted glycoform of 43 kDa.

The protein resides in the golgi apparatus. Its subcellular location is the golgi stack membrane. The protein localises to the secreted. The catalysed reaction is a beta-D-galactosyl-(1-&gt;4)-N-acetyl-beta-D-glucosaminyl derivative + GDP-beta-L-fucose = a beta-D-galactosyl-(1-&gt;4)-[alpha-L-fucosyl-(1-&gt;3)]-N-acetyl-beta-D-glucosaminyl derivative + GDP + H(+). It catalyses the reaction an N-acetyl-alpha-neuraminyl-(2-&gt;3)-beta-D-galactosyl-(1-&gt;4)-N-acetyl-beta-D-glucosaminyl derivative + GDP-beta-L-fucose = an alpha-Neu5Ac-(2-&gt;3)-beta-D-Gal-(1-&gt;4)-[alpha-L-Fuc-(1-&gt;3)]-beta-D-GlcNAc derivative + GDP + H(+). The enzyme catalyses an alpha-Neu5Ac-(2-&gt;3)-beta-D-Gal-(1-&gt;4)-beta-D-GlcNAc-(1-&gt;3)-beta-D-Gal-(1-&gt;4)-[alpha-L-Fuc-(1-&gt;3)]-beta-D-GlcNAc derivative + GDP-beta-L-fucose = an alpha-Neu5Ac-(2-&gt;3)-beta-D-Gal-(1-&gt;4)-[alpha-L-Fuc-(1-&gt;3)]-beta-D-GlcNAc-(1-&gt;3)-beta-D-Gal-(1-&gt;4)-[alpha-L-Fuc-(1-&gt;3)]-beta-D-GlcNAc derivative + GDP + H(+). It carries out the reaction a neolactoside nLc6Cer + GDP-beta-L-fucose = beta-D-Gal-(1-&gt;4)-[alpha-L-Fuc-(1-&gt;3)]-beta-D-GlcNAc-(1-&gt;3)-beta-D-Gal-(1-&gt;4)-beta-D-GlcNAc-(1-&gt;3)-beta-D-Gal-(1-&gt;4)-beta-D-Glc-(1&lt;-&gt;1')-Cer + GDP + H(+). The catalysed reaction is a neolactoside nLc6Cer + GDP-beta-L-fucose = beta-D-galactosyl-(1-&gt;4)-N-acetyl-beta-D-glucosaminyl-(1-&gt;3)-beta-D-galactosyl-(1-&gt;4)-[alpha-L-fucosyl-(1-&gt;3)]-N-acetyl-beta-D-glucosaminyl-(1-&gt;3)-beta-D-galactosyl-(1-&gt;4)-beta-D-glucosyl-(1&lt;-&gt;1')-ceramide + GDP + H(+). It catalyses the reaction a neolactoside VI(3)-alpha-NeuNAc-nLc6Cer + GDP-beta-L-fucose = a neolactoside VI(3)-alpha-NeuAc,V(3)-alphaFuc-nLc6Cer + GDP + H(+). The enzyme catalyses beta-D-galactosyl-(1-&gt;4)-N-acetyl-D-glucosamine + GDP-beta-L-fucose = beta-D-galactosyl-(1-&gt;4)-[alpha-L-fucosyl-(1-&gt;3)]-N-acetyl-D-glucosamine + GDP + H(+). It carries out the reaction N-acetyl-alpha-neuraminosyl-(2-&gt;3)-beta-D-galactosyl-(1-&gt;4)-N-acetyl-beta-D-glucosamine + GDP-beta-L-fucose = N-acetyl-alpha-neuraminosyl-(2-&gt;3)-beta-D-galactosyl-(1-&gt;4)-[alpha-L-fucosyl-(1-&gt;3)]-N-acetyl-beta-D-glucosamine + GDP + H(+). The catalysed reaction is lactose + GDP-beta-L-fucose = beta-D-galactosyl-(1-&gt;4)-[alpha-L-fucosyl-(1-&gt;3)]-D-glucose + GDP + H(+). It catalyses the reaction alpha-L-Fuc-(1-&gt;2)-beta-D-Gal-(1-&gt;4)-D-Glc + GDP-beta-L-fucose = alpha-L-Fuc-(1-&gt;2)-beta-D-Gal-(1-&gt;4)-[alpha-L-Fuc-(1-&gt;3)]-D-Glc + GDP + H(+). The enzyme catalyses a beta-D-galactosyl-(1-&gt;4)-N-acetyl-beta-D-6-sulfooxy-glucosaminyl derivative + GDP-beta-L-fucose = a beta-D-galactosyl-(1-&gt;4)-[alpha-L-fucosyl-(1-&gt;3)]-N-acetyl-beta-D-6-sulfooxy-glucosaminyl derivative + GDP + H(+). It functions in the pathway protein modification; protein glycosylation. Functionally, catalyzes the transfer of L-fucose, from a guanosine diphosphate-beta-L-fucose, to the N-acetyl glucosamine (GlcNAc) of a distal alpha2,3 sialylated lactosamine unit of a glycoprotein- or glycolipid-linked sialopolylactosamines chain or of a distal or internal lactosamine unit of a neutral glycoprotein- or glycolipid-linked polylactosamines chain through an alpha-1,3 glycosidic linkage and participates in surface expression of the sialyl Lewis X (sLe(x)), Lewis X (Le(x)) and non sialylated VIM2 determinants. Moreover transfers fucose to H-type 2 (Fucalpha1-2Galbeta1-4GlcNAc) chain acceptor substrates and participates in difucosylated sialyl Lewis x determinants. Also fucosylates a polylactosamine substrate having a 6 sulfate modification at the GlcNAc moiety and gives rise to sialyl and non-sialyl 6-sulfo lewis X. Does not have activity towards type 1 ((Galbeta1-3GlcNAc)) and H-type 1 chain (Fucalpha1-2Galbeta1-3GlcNAc) acceptors substrates. The chain is 4-galactosyl-N-acetylglucosaminide 3-alpha-L-fucosyltransferase FUT6 from Pongo pygmaeus (Bornean orangutan).